Here is a 351-residue protein sequence, read N- to C-terminus: Vacuolar protein sorting-associated protein 72 homolog (351 aa).

Positions 1–136 (MAASRSRRNN…DSGRKSIRTS (136 aa)) are disordered. The span at 36–72 (QEDEEDKEYEQKDEEEDVVDSDFSIDENDEPVSDQEE) shows a compositional bias: acidic residues. Phosphoserine occurs at positions 56, 59, and 68. Over residues 87-100 (AYKETKPAVKKETK) the composition is skewed to basic and acidic residues. Positions 105-121 (LHKKRPGGGVTKRRPRP) are enriched in basic residues. Residues 142 to 202 (QATKIRLKEL…QKMELEKKKS (61 aa)) adopt a coiled-coil conformation. Residues 156 to 208 (KRKKKKVRVEDYMPTQEELLEEAKITEEENTKSLEKFQKMELEKKKSRPTKRT) mediate DNA binding.

Belongs to the VPS72/YL1 family. In terms of assembly, interacts with H2AV. Component of the Tip60 chromatin-remodeling complex which contains the catalytic subunit Tip60 and the subunits Domino, Tra1, Brd8, E(Pc), DMAP1, Pontin, Reptin, Ing3, Act87E, BAP55, Mrg15, MrgBP, Gas41 and YL-1.

Its subcellular location is the nucleus. Functionally, part of the Tip60 chromatin-remodeling complex which is involved in DNA repair. Upon induction of DNA double-strand breaks, this complex acetylates phosphorylated H2AV in nucleosomes and exchanges it with unmodified H2AV. The protein is Vacuolar protein sorting-associated protein 72 homolog (YL-1) of Drosophila melanogaster (Fruit fly).